The following is a 221-amino-acid chain: MVRLVPRAFAATVALLAAGFSPATASADPVLVFPGMEIRQDNHVCTLGYVDPALKIAFTAGHCRGGGAVTSRDYKVIGHLRAFRDNTPSGSTVATHELIADYEAIVLADDVTASNILPSGRALESRPGVVLHPGQAVCHFGVSTGETCGTVESVNNGWFTMSHGVLSEKGDSGGPVYLAPDGGPAQIVGIFNSVWGGFPAAVSWRSTSEQVHADLGVTPLA.

Positions 1-26 (MVRLVPRAFAATVALLAAGFSPATAS) are cleaved as a signal peptide.

This is an uncharacterized protein from Mycobacterium tuberculosis (strain CDC 1551 / Oshkosh).